Consider the following 402-residue polypeptide: Multidrug resistance protein MdtH (402 aa).

The Cytoplasmic segment spans residues 1 to 12 (MSRVSQARNLGK). A helical transmembrane segment spans residues 13–33 (YFLLIDNMLVVLGFFVVFPLI). Residues 34–98 (SIRFVDQMGW…GFATMGIAHE (65 aa)) are Periplasmic-facing. A helical transmembrane segment spans residues 99–116 (PWLLWFSCLLSGLGGTLF). The Cytoplasmic segment spans residues 117–138 (DPPRSALVVKLIRPQQRGRFFS). Residues 139–159 (LLMMQDSASAVIGALLGSWLL) form a helical membrane-spanning segment. Residues 160 to 164 (QYDFR) lie on the Periplasmic side of the membrane. A helical membrane pass occupies residues 165–185 (LVCATGPVLFVLCAAFNAWLL). The Cytoplasmic segment spans residues 186 to 213 (PAWKLSTVRTPVREGMTRVMRDKRFVTY). A helical transmembrane segment spans residues 214–234 (VLTLAGYYMLAVQVMLMLPIM). Over 235–243 (VNDVAGAPS) the chain is Periplasmic. A helical transmembrane segment spans residues 244–264 (AVKWMYAIEACLSLTLLYPIA). Residues 265–276 (RWSEKHFRLEHR) lie on the Cytoplasmic side of the membrane. The helical transmembrane segment at 277 to 297 (LMAGLLIMSLSMMPVGMVSGL) threads the bilayer. Topologically, residues 298 to 299 (QQ) are periplasmic. Residues 300 to 320 (LFTLICLFYIGSIIAEPARET) traverse the membrane as a helical segment. Topologically, residues 321–339 (LSASLADARARGSYMGFSR) are cytoplasmic. Residues 340-360 (LGLAIGGAIGYIGGGWLFDLG) form a helical membrane-spanning segment. Residues 361–367 (KSAHQPE) are Periplasmic-facing. The helical transmembrane segment at 368–388 (LPWMMLGIIGIFTFLALGWQF) threads the bilayer. Topologically, residues 389 to 402 (SQKRAARRLLERDA) are cytoplasmic.

This sequence belongs to the major facilitator superfamily. DHA1 family. MdtH (TC 2.A.1.2.21) subfamily.

The protein resides in the cell inner membrane. The sequence is that of Multidrug resistance protein MdtH from Shigella flexneri serotype 5b (strain 8401).